The following is a 234-amino-acid chain: Phosphatidylinositol phosphate synthase (234 aa).

Transmembrane regions (helical) follow at residues 28 to 48 (LTPD…ALVL) and 54 to 70 (LFPG…FDML). 31–34 (DAVT) lines the a CDP-1,2-diacyl-sn-glycerol pocket. Mg(2+)-binding residues include Asp-68 and Asp-71. 3 residues coordinate a CDP-1,2-diacyl-sn-glycerol: Gly-72, Arg-76, and Thr-82. 2 residues coordinate Mg(2+): Asp-89 and Asp-93. 4 consecutive transmembrane segments (helical) span residues 91–110 (ACDR…WVAF), 116–134 (LLVV…ISYI), 155–173 (RLII…FIAW), and 179–197 (VAMW…QRLY). Residue Asp-93 is the Proton acceptor of the active site. The disordered stretch occupies residues 211–234 (PSAPVRDDDAQGHPRSGDPGKTQR). Over residues 215-228 (VRDDDAQGHPRSGD) the composition is skewed to basic and acidic residues.

It belongs to the CDP-alcohol phosphatidyltransferase class-I family. Homodimer. Mg(2+) serves as cofactor.

Its subcellular location is the cell membrane. The enzyme catalyses a CDP-1,2-diacyl-sn-glycerol + 1D-myo-inositol 3-phosphate = a 1,2-diacyl-sn-glycero-3-phospho-(1D-myo-inositol-3-phosphate) + CMP + H(+). The catalysed reaction is 1,2-di-(9Z-octadecenoyl)-sn-glycero-3-cytidine-5'-diphosphate + 1D-myo-inositol 3-phosphate = 1,2-di-(9Z-octadecenoyl)-sn-glycero-3-phospho-(1D-myo-inositol-3-phosphate) + CMP + H(+). It participates in phospholipid metabolism; phosphatidylinositol phosphate biosynthesis. Its function is as follows. Catalyzes the conjugation of the 1'-hydroxyl group of D-myo-inositol-3-phosphate (also named L-myo-inositol-1-phosphate) with a lipid tail of cytidine diphosphate diacylglycerol (CDP-DAG), forming phosphatidylinositol phosphate (PIP) and CMP. PIP is a precursor of phosphatidylinositol (PI) which is an essential lipid for mycobacteria required for formation of their cell wall. In Mycobacterium marinum (strain ATCC BAA-535 / M), this protein is Phosphatidylinositol phosphate synthase.